Here is a 345-residue protein sequence, read N- to C-terminus: Phosphate acyltransferase (345 aa).

Belongs to the PlsX family. As to quaternary structure, homodimer. Probably interacts with PlsY.

The protein resides in the cytoplasm. The catalysed reaction is a fatty acyl-[ACP] + phosphate = an acyl phosphate + holo-[ACP]. The protein operates within lipid metabolism; phospholipid metabolism. In terms of biological role, catalyzes the reversible formation of acyl-phosphate (acyl-PO(4)) from acyl-[acyl-carrier-protein] (acyl-ACP). This enzyme utilizes acyl-ACP as fatty acyl donor, but not acyl-CoA. The protein is Phosphate acyltransferase of Nitratidesulfovibrio vulgaris (strain ATCC 29579 / DSM 644 / CCUG 34227 / NCIMB 8303 / VKM B-1760 / Hildenborough) (Desulfovibrio vulgaris).